A 370-amino-acid chain; its full sequence is Cytochrome b (370 aa).

Helical transmembrane passes span 25 to 45 (FGSMLLACSTLQVLTGFFLAV), 69 to 90 (WLMQNLHAIGASMFFICIYIHI), 105 to 125 (WLSGTTLLIMLMATAFFGYVL), and 170 to 190 (FFALHFILPFGIISLSSLHIL). Residues His75 and His89 each contribute to the heme b site. Positions 174 and 188 each coordinate heme b. Residue His193 coordinates a ubiquinone. 4 consecutive transmembrane segments (helical) span residues 218–238 (YKDLLMLAMLTTLLLMIVSFF), 280–300 (LGGALALTMSIMILLTVPFTH), 312–332 (LMQLMFWTFAATFLVISWSST), and 339–358 (FTTISQAAALMYFLFFISKP).

The protein belongs to the cytochrome b family. The cytochrome bc1 complex contains 3 respiratory subunits (MT-CYB, CYC1 and UQCRFS1), 2 core proteins (UQCRC1 and UQCRC2) and probably 6 low-molecular weight proteins. Heme b serves as cofactor.

Its subcellular location is the mitochondrion inner membrane. Functionally, component of the ubiquinol-cytochrome c reductase complex (complex III or cytochrome b-c1 complex) that is part of the mitochondrial respiratory chain. The b-c1 complex mediates electron transfer from ubiquinol to cytochrome c. Contributes to the generation of a proton gradient across the mitochondrial membrane that is then used for ATP synthesis. This Chilabothrus subflavus (Jamaican yellow boa) protein is Cytochrome b (MT-CYB).